The following is a 272-amino-acid chain: Cell division protein ZipA (272 aa).

Residues methionine 1–histidine 4 are Periplasmic-facing. A helical membrane pass occupies residues isoleucine 5–serine 25. The Cytoplasmic segment spans residues alanine 26–asparagine 272.

This sequence belongs to the ZipA family. Interacts with FtsZ via their C-terminal domains.

Its subcellular location is the cell inner membrane. Essential cell division protein that stabilizes the FtsZ protofilaments by cross-linking them and that serves as a cytoplasmic membrane anchor for the Z ring. Also required for the recruitment to the septal ring of downstream cell division proteins. This is Cell division protein ZipA from Glaesserella parasuis serovar 5 (strain SH0165) (Haemophilus parasuis).